The sequence spans 421 residues: MKDLENIPALMEDIGKRAKAAAQQLATASAAQKEQALNAAADAVWAQRGEIIAANAKDLEFGRDKGLSSAMMDRLMLDEARIQGIVDGLRAVAAQADPVGAVLDEWTQPSGLRIQRVRTPLGVIGVIYESRPNVTADAGALCLKSGNAVILRGGSESLHSAQAIHGCLAAGLRAADLPEDAVQLVPTRDRAAVQELLTMTAYVDVIVPRGGKGLVGLVQREARVPVFAHLEGIVHIYLDKDADRKKAIDVVLNAKTRRTGICGAAECLLIHEDIADSIGKDVLDLLAMGGVEIHAEEGLPGPDSMQVATSEDWGKEYLDAIIAAKKVASIDEAIAHIRRYHSAHTDCIITENDAAVAQFFSELDSAILMHNASTQFADGGEFGMGAEIGIATGKMHARGPVGATQLTSFKYLVRGDGTVRA.

The protein belongs to the gamma-glutamyl phosphate reductase family.

The protein localises to the cytoplasm. It carries out the reaction L-glutamate 5-semialdehyde + phosphate + NADP(+) = L-glutamyl 5-phosphate + NADPH + H(+). It participates in amino-acid biosynthesis; L-proline biosynthesis; L-glutamate 5-semialdehyde from L-glutamate: step 2/2. Catalyzes the NADPH-dependent reduction of L-glutamate 5-phosphate into L-glutamate 5-semialdehyde and phosphate. The product spontaneously undergoes cyclization to form 1-pyrroline-5-carboxylate. This is Gamma-glutamyl phosphate reductase from Ruegeria sp. (strain TM1040) (Silicibacter sp.).